The chain runs to 542 residues: Monocarboxylate transporter 3 (542 aa).

The Cytoplasmic segment spans residues 1–19; sequence MGRADPEEGQLPAPVKPPD. A helical membrane pass occupies residues 20 to 40; it reads GGWGWIVLFGCFVITGFSYAF. Residues 41-63 are Extracellular-facing; it reads PKAVSVYFKELMKDFHVGYSDTA. A helical transmembrane segment spans residues 64–84; the sequence is WISSIMLAMLYGTGPVCSIMV. At 85-93 the chain is on the cytoplasmic side; the sequence is NQFGCRPVM. The helical transmembrane segment at 94 to 114 threads the bilayer; sequence LIGGLLASSGMILASFTTNII. Over 115 to 119 the chain is Extracellular; that stretch reads ELYLT. The helical transmembrane segment at 120-140 threads the bilayer; it reads AGVLTGLGMALNFQPSLIMLG. The Cytoplasmic portion of the chain corresponds to 141-152; sequence TYFDKRRPLANG. The helical transmembrane segment at 153-173 threads the bilayer; the sequence is LAAAGSPVFLSSLSPLGQVLL. The Extracellular segment spans residues 174–181; that stretch reads EKFGWRGG. The helical transmembrane segment at 182–202 threads the bilayer; that stretch reads FLIMGGLLLNCCTCGAVMRPL. Over 203–265 the chain is Cytoplasmic; that stretch reads DAGMKRKTEK…LDFSIFSNRG (63 aa). Positions 226-247 are disordered; that stretch reads GGKSEEGISTTDGTKKTKKAKK. Residues 266–286 traverse the membrane as a helical segment; sequence FIIYTISKFILVLGLFVPPIL. Residues 287 to 301 lie on the Extracellular side of the membrane; the sequence is LVNYAKDTGVPDTEA. The helical transmembrane segment at 302 to 322 threads the bilayer; that stretch reads AFLLSIIGFIDIFARPACGMV. The Cytoplasmic portion of the chain corresponds to 323 to 330; it reads AGLKWVRP. Residues 331–351 traverse the membrane as a helical segment; it reads HVAYLFSFAMLFNGLTDICSA. The Extracellular portion of the chain corresponds to 352–357; the sequence is RASNYT. Residues 358–378 traverse the membrane as a helical segment; that stretch reads GLVIFCVFFGISYGMVGALQF. The Cytoplasmic segment spans residues 379–392; it reads EVLMAIVGSQKFSS. Residues 393 to 413 form a helical membrane-spanning segment; sequence AIGLVLLIEAFAVLIGPPSAG. Topologically, residues 414-423 are extracellular; sequence RLVDALKNYE. A helical transmembrane segment spans residues 424 to 444; the sequence is VIFYLAGSEVVLSALFLAMAT. At 445–542 the chain is on the cytoplasmic side; that stretch reads YCCLNRGKKT…ADQTVERDSF (98 aa). Residues 453-542 form a disordered region; sequence KTPPPEKNPS…ADQTVERDSF (90 aa). Basolateral sorting signal regions lie at residues 465 to 510 and 511 to 532; these read GGSD…VEDE and QSGE…AGCN. Residues 468-478 show a composition bias toward acidic residues; it reads DTEEAESDVQE.

The protein belongs to the major facilitator superfamily. Monocarboxylate porter (TC 2.A.1.13) family. Retinal pigment epithelium.

It is found in the basolateral cell membrane. The enzyme catalyses (S)-lactate(in) + H(+)(in) = (S)-lactate(out) + H(+)(out). Functionally, probable retinal pigment epithelium (RPE)-specific proton-coupled L-lactate transporter. May facilitate transport of lactate and H(+) out of the retina and could therefore play a role in pH and ion homeostasis of the outer retina. This is Monocarboxylate transporter 3 (SLC16A8) from Gallus gallus (Chicken).